Reading from the N-terminus, the 949-residue chain is Glutamate receptor ionotropic, kainate 1 (949 aa).

Residues 1-30 form the signal peptide; the sequence is MERSTVLIQPGLWTRDTSWTLLYFLCYILP. Residues 31–576 lie on the Extracellular side of the membrane; sequence QTSPQVLRIG…VFSFLNPLSP (546 aa). Residues Asn-68, Asn-74, Asn-276, Asn-379, Asn-428, Asn-439, and Asn-446 are each glycosylated (N-linked (GlcNAc...) asparagine). 3 residues coordinate L-glutamate: Pro-531, Thr-533, and Arg-538. Asn-561 carries an N-linked (GlcNAc...) asparagine glycan. Residues 577–597 form a helical membrane-spanning segment; that stretch reads DIWMYVLLACLGVSCVLFVIA. Topologically, residues 598–653 are cytoplasmic; it reads RFTPYEWYNPHPCNPDSDVVENNFTLLNSFWFGVGALMQQGSELMPKALSTRIVGG. The chain crosses the membrane as a helical span at residues 654 to 674; the sequence is IWWFFTLIIISSYTANLAAFL. Over 675-834 the chain is Extracellular; sequence TVERMESPID…KEASALGVEN (160 aa). L-glutamate is bound by residues Ser-704 and Thr-705. A Phosphoserine; by PKC modification is found at Ser-725. Glu-753 is a binding site for L-glutamate. Position 761 is a phosphothreonine; by PKC (Thr-761). A disulfide bridge links Cys-765 with Cys-819. Residue Asn-766 is glycosylated (N-linked (GlcNAc...) asparagine). A helical membrane pass occupies residues 835–855; that stretch reads IGGIFIVLAAGLVLSVFVAIG. Over 856–949 the chain is Cytoplasmic; the sequence is EFLYKSRKNN…RRTQRKETVA (94 aa).

It belongs to the glutamate-gated ion channel (TC 1.A.10.1) family. GRIK1 subfamily. Homotetramer or heterotetramer of pore-forming glutamate receptor subunits. Tetramers may be formed by the dimerization of dimers. Can form functional heteromeric receptors with GRIK4 and GRIK5. Interacts with KLHL17. In terms of tissue distribution, expressed in the olfactory bulb (at protein level). Expressed in subsets of neurons throughout the developing and adult central and peripheral nervous systems. In the CNS principally in the medial amygdaloid nuclei, medial habenulae, pyriform and cingulate cortices, and Purkinje cell layer. Also highly expressed in embryonic and adult dorsal root ganglia. Expressed at high levels in the trigeminal ganglion neurons.

It is found in the cell membrane. It localises to the postsynaptic cell membrane. The catalysed reaction is Ca(2+)(in) = Ca(2+)(out). Its function is as follows. Ionotropic glutamate receptor that functions as a cation-permeable ligand-gated ion channel, gated by L-glutamate and the glutamatergic agonist kainic acid. L-glutamate acts as an excitatory neurotransmitter at many synapses in the central nervous system. Binding of the excitatory neurotransmitter L-glutamate induces a conformation change, leading to the opening of the cation channel, and thereby converts the chemical signal to an electrical impulse. The receptor then desensitizes rapidly and enters a transient inactive state, characterized by the presence of bound agonist. In Rattus norvegicus (Rat), this protein is Glutamate receptor ionotropic, kainate 1 (Grik1).